Consider the following 250-residue polypeptide: Triosephosphate isomerase (250 aa).

Residue 9 to 11 (NWK) coordinates substrate. Residue H95 is the Electrophile of the active site. Residue E167 is the Proton acceptor of the active site. Substrate-binding positions include G173, S213, and 234 to 235 (GG).

It belongs to the triosephosphate isomerase family. As to quaternary structure, homodimer.

It localises to the cytoplasm. It catalyses the reaction D-glyceraldehyde 3-phosphate = dihydroxyacetone phosphate. It participates in carbohydrate biosynthesis; gluconeogenesis. The protein operates within carbohydrate degradation; glycolysis; D-glyceraldehyde 3-phosphate from glycerone phosphate: step 1/1. Functionally, involved in the gluconeogenesis. Catalyzes stereospecifically the conversion of dihydroxyacetone phosphate (DHAP) to D-glyceraldehyde-3-phosphate (G3P). The protein is Triosephosphate isomerase of Herpetosiphon aurantiacus (strain ATCC 23779 / DSM 785 / 114-95).